A 160-amino-acid polypeptide reads, in one-letter code: NADH-quinone oxidoreductase subunit B (160 aa).

Positions 37, 38, 102, and 132 each coordinate [4Fe-4S] cluster.

It belongs to the complex I 20 kDa subunit family. As to quaternary structure, NDH-1 is composed of 14 different subunits. Subunits NuoB, C, D, E, F, and G constitute the peripheral sector of the complex. It depends on [4Fe-4S] cluster as a cofactor.

Its subcellular location is the cell inner membrane. It catalyses the reaction a quinone + NADH + 5 H(+)(in) = a quinol + NAD(+) + 4 H(+)(out). NDH-1 shuttles electrons from NADH, via FMN and iron-sulfur (Fe-S) centers, to quinones in the respiratory chain. Couples the redox reaction to proton translocation (for every two electrons transferred, four hydrogen ions are translocated across the cytoplasmic membrane), and thus conserves the redox energy in a proton gradient. The polypeptide is NADH-quinone oxidoreductase subunit B (Cupriavidus pinatubonensis (strain JMP 134 / LMG 1197) (Cupriavidus necator (strain JMP 134))).